The following is a 497-amino-acid chain: Glycogen synthase (497 aa).

K15 is an ADP-alpha-D-glucose binding site.

Belongs to the glycosyltransferase 1 family. Bacterial/plant glycogen synthase subfamily.

It carries out the reaction [(1-&gt;4)-alpha-D-glucosyl](n) + ADP-alpha-D-glucose = [(1-&gt;4)-alpha-D-glucosyl](n+1) + ADP + H(+). It participates in glycan biosynthesis; glycogen biosynthesis. Functionally, synthesizes alpha-1,4-glucan chains using ADP-glucose. The polypeptide is Glycogen synthase (Thermodesulfovibrio yellowstonii (strain ATCC 51303 / DSM 11347 / YP87)).